The primary structure comprises 494 residues: Probable capsid protein (494 aa).

The short motif at 120–123 (RPKR) is the Nuclear localization signal element. The CCHC-type zinc-finger motif lies at 418 to 435 (CRCWVCNIEGHYANECPN). A disordered region spans residues 474–494 (LSSSDSELDDTCEESSSEESE). The span at 479-494 (SELDDTCEESSSEESE) shows a compositional bias: acidic residues.

This sequence belongs to the caulimoviridae capsid protein family. In terms of assembly, interacts (via nuclear localization signal) with host importin alpha.

Its subcellular location is the virion. It localises to the host nucleus. Self assembles to form an icosahedral capsid, about 50 nm in diameter, nm, composed of 420 subunits of the viral capsid protein. The capsid encapsulates the genomic dsDNA. Following virus entry into host cell, provides nuclear import of the viral genome. Virus particles do not enter the nucleus, but dock at the nuclear membrane through the interaction with host importins. The polypeptide is Probable capsid protein (Dianthus caryophyllus (Carnation)).